The primary structure comprises 383 residues: Carbamoyl phosphate synthase small chain (383 aa).

A CPSase region spans residues 1-190; sequence MPHPSSRQAH…FDQRLKQHPD (190 aa). Residues Ser51, Gly242, and Gly244 each contribute to the L-glutamine site. The region spanning 194 to 381 is the Glutamine amidotransferase type-1 domain; it reads RVVAIDFGIK…VALMADRRDV (188 aa). Cys271 serves as the catalytic Nucleophile. 5 residues coordinate L-glutamine: Leu272, Gln275, Asn311, Gly313, and Phe314. Residues His354 and Glu356 contribute to the active site.

Belongs to the CarA family. In terms of assembly, composed of two chains; the small (or glutamine) chain promotes the hydrolysis of glutamine to ammonia, which is used by the large (or ammonia) chain to synthesize carbamoyl phosphate. Tetramer of heterodimers (alpha,beta)4.

The catalysed reaction is hydrogencarbonate + L-glutamine + 2 ATP + H2O = carbamoyl phosphate + L-glutamate + 2 ADP + phosphate + 2 H(+). It carries out the reaction L-glutamine + H2O = L-glutamate + NH4(+). It functions in the pathway amino-acid biosynthesis; L-arginine biosynthesis; carbamoyl phosphate from bicarbonate: step 1/1. It participates in pyrimidine metabolism; UMP biosynthesis via de novo pathway; (S)-dihydroorotate from bicarbonate: step 1/3. Its function is as follows. Small subunit of the glutamine-dependent carbamoyl phosphate synthetase (CPSase). CPSase catalyzes the formation of carbamoyl phosphate from the ammonia moiety of glutamine, carbonate, and phosphate donated by ATP, constituting the first step of 2 biosynthetic pathways, one leading to arginine and/or urea and the other to pyrimidine nucleotides. The small subunit (glutamine amidotransferase) binds and cleaves glutamine to supply the large subunit with the substrate ammonia. This is Carbamoyl phosphate synthase small chain from Parasynechococcus marenigrum (strain WH8102).